Here is a 289-residue protein sequence, read N- to C-terminus: Type III pantothenate kinase (289 aa).

Residue 9–16 (DAGNSRVK) coordinates ATP. Substrate is bound by residues tyrosine 106 and 113 to 116 (GSDR). The active-site Proton acceptor is the aspartate 115. ATP is bound at residue threonine 139. Threonine 209 is a binding site for substrate.

This sequence belongs to the type III pantothenate kinase family. In terms of assembly, homodimer. NH4(+) is required as a cofactor. K(+) serves as cofactor.

Its subcellular location is the cytoplasm. The catalysed reaction is (R)-pantothenate + ATP = (R)-4'-phosphopantothenate + ADP + H(+). Its pathway is cofactor biosynthesis; coenzyme A biosynthesis; CoA from (R)-pantothenate: step 1/5. Functionally, catalyzes the phosphorylation of pantothenate (Pan), the first step in CoA biosynthesis. The sequence is that of Type III pantothenate kinase from Paraburkholderia phymatum (strain DSM 17167 / CIP 108236 / LMG 21445 / STM815) (Burkholderia phymatum).